Reading from the N-terminus, the 91-residue chain is Large ribosomal subunit protein bL27 (91 aa).

Residues 1–13 are compositionally biased toward polar residues; that stretch reads MATKKSGGSSCNG. The tract at residues 1–20 is disordered; it reads MATKKSGGSSCNGRDSRGRR.

The protein belongs to the bacterial ribosomal protein bL27 family.

The sequence is that of Large ribosomal subunit protein bL27 from Anaplasma phagocytophilum (strain HZ).